Here is a 327-residue protein sequence, read N- to C-terminus: Flap endonuclease 1 (327 aa).

Positions 1–100 (MGNADLRQLA…DEIADRREQR (100 aa)) are N-domain. Mg(2+)-binding residues include aspartate 28, aspartate 82, glutamate 154, glutamate 156, aspartate 176, aspartate 178, and aspartate 226. The I-domain stretch occupies residues 118 to 247 (EAARLDARTQ…TALDAIGEHG (130 aa)). The tract at residues 319–327 (AQTGLDRWT) is interaction with PCNA.

Belongs to the XPG/RAD2 endonuclease family. FEN1 subfamily. As to quaternary structure, interacts with PCNA. PCNA stimulates the nuclease activity without altering cleavage specificity. Mg(2+) serves as cofactor.

Structure-specific nuclease with 5'-flap endonuclease and 5'-3' exonuclease activities involved in DNA replication and repair. During DNA replication, cleaves the 5'-overhanging flap structure that is generated by displacement synthesis when DNA polymerase encounters the 5'-end of a downstream Okazaki fragment. Binds the unpaired 3'-DNA end and kinks the DNA to facilitate 5' cleavage specificity. Cleaves one nucleotide into the double-stranded DNA from the junction in flap DNA, leaving a nick for ligation. Also involved in the base excision repair (BER) pathway. Acts as a genome stabilization factor that prevents flaps from equilibrating into structures that lead to duplications and deletions. Also possesses 5'-3' exonuclease activity on nicked or gapped double-stranded DNA. The protein is Flap endonuclease 1 of Halobacterium salinarum (strain ATCC 29341 / DSM 671 / R1).